Here is a 357-residue protein sequence, read N- to C-terminus: Neuronal-specific septin-3 (357 aa).

A compositionally biased stretch (basic and acidic residues) spans 1–10 (MSKGLPETRT). The segment at 1 to 29 (MSKGLPETRTDAAMSELVPEPRPKPAVPM) is disordered. A Septin-type G domain is found at 58–330 (TGFDFNIMVV…ETYRAKRLND (273 aa)). Residues 68 to 75 (GQSGLGKS) are G1 motif. 68 to 75 (GQSGLGKS) contributes to the GTP binding site. Ser91 is subject to Phosphoserine. Position 102 (Thr102) interacts with GTP. The interval 125 to 128 (DTPG) is G3 motif. Residues 207 to 210 (AKAD) form a G4 motif region. GTP is bound by residues 208-216 (KADTMTLEE), Gly264, and Arg279.

The protein belongs to the TRAFAC class TrmE-Era-EngA-EngB-Septin-like GTPase superfamily. Septin GTPase family. In terms of assembly, septins polymerize into heterooligomeric protein complexes that form filaments, and can associate with cellular membranes, actin filaments and microtubules. GTPase activity is required for filament formation. Post-translationally, phosphorylated by PKG on serine residues. Phosphorylated by PKG on Ser-91.

The protein resides in the cytoplasm. It localises to the cytoskeleton. Its subcellular location is the synapse. Functionally, filament-forming cytoskeletal GTPase. May play a role in cytokinesis (Potential). The chain is Neuronal-specific septin-3 from Bos taurus (Bovine).